The following is a 208-amino-acid chain: ATP-dependent Clp protease proteolytic subunit (208 aa).

Serine 107 serves as the catalytic Nucleophile. Histidine 132 is a catalytic residue.

The protein belongs to the peptidase S14 family. Fourteen ClpP subunits assemble into 2 heptameric rings which stack back to back to give a disk-like structure with a central cavity, resembling the structure of eukaryotic proteasomes.

It localises to the cytoplasm. The catalysed reaction is Hydrolysis of proteins to small peptides in the presence of ATP and magnesium. alpha-casein is the usual test substrate. In the absence of ATP, only oligopeptides shorter than five residues are hydrolyzed (such as succinyl-Leu-Tyr-|-NHMec, and Leu-Tyr-Leu-|-Tyr-Trp, in which cleavage of the -Tyr-|-Leu- and -Tyr-|-Trp bonds also occurs).. In terms of biological role, cleaves peptides in various proteins in a process that requires ATP hydrolysis. Has a chymotrypsin-like activity. Plays a major role in the degradation of misfolded proteins. This Methylobacterium radiotolerans (strain ATCC 27329 / DSM 1819 / JCM 2831 / NBRC 15690 / NCIMB 10815 / 0-1) protein is ATP-dependent Clp protease proteolytic subunit.